The chain runs to 279 residues: Oxygen-dependent coproporphyrinogen-III oxidase (279 aa).

Serine 102 lines the substrate pocket. A divalent metal cation contacts are provided by histidine 106 and histidine 116. Histidine 116 serves as the catalytic Proton donor. 118-120 contributes to the substrate binding site; the sequence is NTR. The a divalent metal cation site is built by histidine 149 and histidine 179. The interval 244–279 is important for dimerization; it reads YVEFNLLYDRGTKFGLMTDGNVEAILMSLPPEVKFN.

This sequence belongs to the aerobic coproporphyrinogen-III oxidase family. Homodimer. The cofactor is a divalent metal cation.

The protein resides in the cytoplasm. It carries out the reaction coproporphyrinogen III + O2 + 2 H(+) = protoporphyrinogen IX + 2 CO2 + 2 H2O. The protein operates within porphyrin-containing compound metabolism; protoporphyrin-IX biosynthesis; protoporphyrinogen-IX from coproporphyrinogen-III (O2 route): step 1/1. Involved in the heme biosynthesis. Catalyzes the aerobic oxidative decarboxylation of propionate groups of rings A and B of coproporphyrinogen-III to yield the vinyl groups in protoporphyrinogen-IX. The sequence is that of Oxygen-dependent coproporphyrinogen-III oxidase from Rickettsia conorii (strain ATCC VR-613 / Malish 7).